The following is a 156-amino-acid chain: Small ribosomal subunit protein uS7 (156 aa).

The protein belongs to the universal ribosomal protein uS7 family. In terms of assembly, part of the 30S ribosomal subunit. Contacts proteins S9 and S11.

Functionally, one of the primary rRNA binding proteins, it binds directly to 16S rRNA where it nucleates assembly of the head domain of the 30S subunit. Is located at the subunit interface close to the decoding center, probably blocks exit of the E-site tRNA. The chain is Small ribosomal subunit protein uS7 from Geotalea uraniireducens (strain Rf4) (Geobacter uraniireducens).